The chain runs to 95 residues: Co-chaperonin GroES (95 aa).

It belongs to the GroES chaperonin family. In terms of assembly, heptamer of 7 subunits arranged in a ring. Interacts with the chaperonin GroEL.

It localises to the cytoplasm. Functionally, together with the chaperonin GroEL, plays an essential role in assisting protein folding. The GroEL-GroES system forms a nano-cage that allows encapsulation of the non-native substrate proteins and provides a physical environment optimized to promote and accelerate protein folding. GroES binds to the apical surface of the GroEL ring, thereby capping the opening of the GroEL channel. The sequence is that of Co-chaperonin GroES from Bordetella petrii (strain ATCC BAA-461 / DSM 12804 / CCUG 43448).